A 473-amino-acid polypeptide reads, in one-letter code: Ras-GEF domain-containing family member 1B (473 aa).

In terms of domain architecture, N-terminal Ras-GEF spans 34–161; the sequence is HDNNLLSGSL…NVQQMMQCLI (128 aa). The Ras-GEF domain occupies 205 to 453; it reads DPYTLAQQLT…YLASYESEGP (249 aa).

Interacts with CCDC124 during cytokinesis. Interacts with Ras family proteins. Constitutively expressed in brain, intestine and testis. Low constitutive expression, if any, in heart, lung, lymph nodes and thymus. Up-regulated in heart, kidney, liver, lymph nodes, spleen and thymus at day 20 after infection with Trypanosoma cruzi. Not detected in muscle.

It localises to the early endosome. It is found in the late endosome. The protein resides in the midbody. Functionally, guanine nucleotide exchange factor (GEF) with specificity for RAP2A, it doesn't seems to activate other Ras family proteins (in vitro). This is Ras-GEF domain-containing family member 1B (Rasgef1b) from Mus musculus (Mouse).